The chain runs to 478 residues: Bifunctional protein HldE (478 aa).

The tract at residues 1 to 318 (MKITLPDFTR…ENAIHARPES (318 aa)) is ribokinase. 195 to 198 (NLSE) serves as a coordination point for ATP. Residue Asp264 is part of the active site. Residues 344-478 (MTNGVFDILH…KTIISGSGKN (135 aa)) form a cytidylyltransferase region.

It in the N-terminal section; belongs to the carbohydrate kinase PfkB family. This sequence in the C-terminal section; belongs to the cytidylyltransferase family. In terms of assembly, homodimer.

It carries out the reaction D-glycero-beta-D-manno-heptose 7-phosphate + ATP = D-glycero-beta-D-manno-heptose 1,7-bisphosphate + ADP + H(+). The enzyme catalyses D-glycero-beta-D-manno-heptose 1-phosphate + ATP + H(+) = ADP-D-glycero-beta-D-manno-heptose + diphosphate. It functions in the pathway nucleotide-sugar biosynthesis; ADP-L-glycero-beta-D-manno-heptose biosynthesis; ADP-L-glycero-beta-D-manno-heptose from D-glycero-beta-D-manno-heptose 7-phosphate: step 1/4. It participates in nucleotide-sugar biosynthesis; ADP-L-glycero-beta-D-manno-heptose biosynthesis; ADP-L-glycero-beta-D-manno-heptose from D-glycero-beta-D-manno-heptose 7-phosphate: step 3/4. In terms of biological role, catalyzes the phosphorylation of D-glycero-D-manno-heptose 7-phosphate at the C-1 position to selectively form D-glycero-beta-D-manno-heptose-1,7-bisphosphate. Catalyzes the ADP transfer from ATP to D-glycero-beta-D-manno-heptose 1-phosphate, yielding ADP-D-glycero-beta-D-manno-heptose. This is Bifunctional protein HldE from Erwinia tasmaniensis (strain DSM 17950 / CFBP 7177 / CIP 109463 / NCPPB 4357 / Et1/99).